Consider the following 1160-residue polypeptide: Large proline-rich protein BAG6 (1160 aa).

Positions 7 to 82 (IEVTVKTLDS…HLVERPPPQS (76 aa)) constitute a Ubiquitin-like domain. Disordered stretches follow at residues 76-114 (ERPPPQSSQPGGGGGGVSGSSGAADGGSSSSQSSAYTTS), 206-261 (EGQS…HPSP), 367-422 (IPMN…GQGT), 478-547 (ASAG…QTNQ), 563-628 (GDQT…DNLA), 672-711 (SGQPVFPSPNQQPPPSQATPPSAPSGPAPTTAPSGGAETL), 962-1038 (SARR…AEPW), and 1126-1160 (YAQQVKSDIKKRLSDDPDYNHQRFPNTHRVFSEDA). Positions 85-94 (PGGGGGGVSG) are enriched in gly residues. Low complexity-rich tracts occupy residues 95 to 110 (SSGAADGGSSSSQSSA) and 223 to 233 (SSSSFSAHPMD). 2 stretches are compositionally biased toward polar residues: residues 247-257 (QTEGETQSGPN) and 371-417 (LGST…QQTG). Low complexity-rich tracts occupy residues 478 to 495 (ASAGHQGQQQGTAGAGAQ) and 566 to 614 (TSTT…STAS). A compositionally biased stretch (pro residues) spans 677–698 (FPSPNQQPPPSQATPPSAPSGP). Over residues 699 to 708 (APTTAPSGGA) the composition is skewed to low complexity. Positions 1132–1146 (SDIKKRLSDDPDYNH) are enriched in basic and acidic residues.

In terms of assembly, component of the bag6/bat3 complex.

Its subcellular location is the cytoplasm. The protein localises to the cytosol. It is found in the nucleus. It localises to the secreted. The protein resides in the extracellular exosome. Functionally, ATP-independent molecular chaperone preventing the aggregation of misfolded and hydrophobic patches-containing proteins. Functions as part of a cytosolic protein quality control complex, the bag6/bat3 complex, which maintains these client proteins in a soluble state and participates in their proper delivery to the endoplasmic reticulum or alternatively can promote their sorting to the proteasome where they undergo degradation. The bag6/bat3 complex is involved in the post-translational delivery of tail-anchored/type II transmembrane proteins to the endoplasmic reticulum membrane. Similarly, the bag6/bat3 complex also functions as a sorting platform for proteins of the secretory pathway that are mislocalized to the cytosol either delivering them to the proteasome for degradation or to the endoplasmic reticulum. The bag6/bat3 complex also plays a role in the endoplasmic reticulum-associated degradation (ERAD), a quality control mechanism that eliminates unwanted proteins of the endoplasmic reticulum through their retrotranslocation to the cytosol and their targeting to the proteasome. It maintains these retrotranslocated proteins in an unfolded yet soluble state condition in the cytosol to ensure their proper delivery to the proteasome. Also required for selective ubiquitin-mediated degradation of defective nascent chain polypeptides by the proteasome. Also involved in endoplasmic reticulum stress-induced pre-emptive quality control, a mechanism that selectively attenuates the translocation of newly synthesized proteins into the endoplasmic reticulum and reroutes them to the cytosol for proteasomal degradation. May ensure the proper degradation of these proteins and thereby protects the endoplasmic reticulum from protein overload upon stress. By stabilizing a large spectrum of proteins, may indirectly affect different biological processes including apoptosis. By controlling the steady-state expression of the IGF1R receptor, indirectly regulates the insulin-like growth factor receptor signaling pathway. Its function is as follows. When nuclear, may also act as a component of some chromatin regulator complex. The protein is Large proline-rich protein BAG6 of Danio rerio (Zebrafish).